Reading from the N-terminus, the 354-residue chain is Probable mannitol dehydrogenase 1 (354 aa).

Residues Cys43, His65, Cys96, Cys99, Cys102, Cys110, and Cys158 each coordinate Zn(2+).

This sequence belongs to the zinc-containing alcohol dehydrogenase family. The cofactor is Zn(2+).

It catalyses the reaction D-mannitol + NAD(+) = D-mannose + NADH + H(+). Functionally, oxidizes mannitol to mannose. Provides the initial step by which translocated mannitol is committed to central metabolism and, by regulating mannitol pool size, is important in regulating salt tolerance at the cellular level. The chain is Probable mannitol dehydrogenase 1 (CAD1) from Stylosanthes humilis (Townsville stylo).